Consider the following 477-residue polypeptide: Actin-related protein 7 (477 aa).

This sequence belongs to the actin family. In terms of assembly, forms a heterodimer with ARP9. Interacts with NPL6. Component of the two forms of the RSC complex composed of at least either RSC1 or RSC2, and ARP7, ARP9, LDB7, NPL6, RSC3, RSC30, RSC4, RSC58, RSC6, RSC8, RSC9, SFH1, STH1, HTL1 and probably RTT102. The complexes interact with histone and histone variant components of centromeric chromatin. Component of the SWI/SNF global transcription activator complex. The 1.14 MDa SWI/SNF complex is composed of 11 different subunits: one copy each of SWI1, SNF2/SWI2, SNF5, SNF12/SWP73, ARP7/SWP61, ARP9/SWP59; two copies each of SWI3, SNF6, SNF11, SWP82; and three copies of TAF14/SWP29.

The protein localises to the nucleus. Its function is as follows. Component of the chromatin structure remodeling complex (RSC), which is involved in transcription regulation and nucleosome positioning. RSC is responsible for the transfer of a histone octamer from a nucleosome core particle to naked DNA. The reaction requires ATP and involves an activated RSC-nucleosome intermediate. Remodeling reaction also involves DNA translocation, DNA twist and conformational change. As a reconfigurer of centromeric and flanking nucleosomes, RSC complex is required both for proper kinetochore function in chromosome segregation and, via a PKC1-dependent signaling pathway, for organization of the cellular cytoskeleton. This subunit is involved in transcriptional regulation. Heterodimer of ARP7 and ARP9 functions with HMG box proteins to facilitate proper chromatin architecture. Heterodimer formation is necessary for assembly into RSC complex. Part of the SWI/SNF complex, an ATP-dependent chromatin remodeling complex, is required for the positive and negative regulation of gene expression of a large number of genes. It changes chromatin structure by altering DNA-histone contacts within a nucleosome, leading eventually to a change in nucleosome position, thus facilitating or repressing binding of gene-specific transcription factors. In Saccharomyces cerevisiae (strain ATCC 204508 / S288c) (Baker's yeast), this protein is Actin-related protein 7 (ARP7).